The following is a 320-amino-acid chain: Ferrochelatase (320 aa).

His-194 and Glu-275 together coordinate Fe cation.

It belongs to the ferrochelatase family. Monomer.

The protein resides in the cytoplasm. The enzyme catalyses heme b + 2 H(+) = protoporphyrin IX + Fe(2+). It participates in porphyrin-containing compound metabolism; protoheme biosynthesis; protoheme from protoporphyrin-IX: step 1/1. In terms of biological role, catalyzes the ferrous insertion into protoporphyrin IX. This Escherichia coli O157:H7 (strain EC4115 / EHEC) protein is Ferrochelatase.